Here is a 453-residue protein sequence, read N- to C-terminus: uncharacterized protein (453 aa).

The TRAM domain occupies 5 to 63; sequence LLKKNQSIELTIEDLTHDGSGVGKIDGYPLFIPNTLPGEKVTAKIIKLNKNYGFARMEN. [4Fe-4S] cluster contacts are provided by Cys-76, Cys-82, Cys-85, and Cys-162. S-adenosyl-L-methionine contacts are provided by Gln-285, Tyr-314, Glu-335, and Asp-383. Residue Cys-410 is the Nucleophile of the active site.

The protein belongs to the class I-like SAM-binding methyltransferase superfamily. RNA M5U methyltransferase family.

This is an uncharacterized protein from Listeria monocytogenes serotype 4b (strain F2365).